A 196-amino-acid polypeptide reads, in one-letter code: Secreted phosphoprotein 24 (196 aa).

The first 19 residues, 1–19 (MKWCGVLMVALLQSLCCSG), serve as a signal peptide directing secretion. Intrachain disulfides connect cysteine 83–cysteine 94 and cysteine 107–cysteine 125. The tract at residues 125 to 196 (CGQDSSSSES…RGDSFGNHLE (72 aa)) is disordered. Positions 129–138 (SSSSESSSEE) are enriched in low complexity.

This sequence belongs to the SPP2 family. In terms of processing, multiply phosphorylated at serine residues.

The protein localises to the secreted. Could coordinate an aspect of bone turnover. This Salmo salar (Atlantic salmon) protein is Secreted phosphoprotein 24 (spp2).